Here is a 491-residue protein sequence, read N- to C-terminus: Subtilase-type proteinase RRT12 (491 aa).

The signal sequence occupies residues 1-17; sequence MKPQCILISLLVNLAYA. 4 N-linked (GlcNAc...) asparagine glycosylation sites follow: asparagine 38, asparagine 64, asparagine 106, and asparagine 121. The region spanning 142–442 is the Peptidase S8 domain; sequence PFDVGDKDRY…FPRLNIEAIA (301 aa). Active-site charge relay system residues include aspartate 174 and histidine 205. N-linked (GlcNAc...) asparagine glycosylation is found at asparagine 268 and asparagine 356. Serine 365 acts as the Charge relay system in catalysis. Asparagine 449 is a glycosylation site (N-linked (GlcNAc...) asparagine).

The protein belongs to the peptidase S8 family. In terms of processing, N-glycosylated.

It localises to the spore wall. In terms of biological role, subtilisin-related protease involved in the formation of a protective dityrosine layer required for spore wall assembly. Identified in a screen for mutants with increased levels of rDNA transcription. The protein is Subtilase-type proteinase RRT12 (RRT12) of Saccharomyces cerevisiae (strain ATCC 204508 / S288c) (Baker's yeast).